The following is a 116-amino-acid chain: Large ribosomal subunit protein bL20 (116 aa).

Belongs to the bacterial ribosomal protein bL20 family.

Its function is as follows. Binds directly to 23S ribosomal RNA and is necessary for the in vitro assembly process of the 50S ribosomal subunit. It is not involved in the protein synthesizing functions of that subunit. In Bacteroides fragilis (strain ATCC 25285 / DSM 2151 / CCUG 4856 / JCM 11019 / LMG 10263 / NCTC 9343 / Onslow / VPI 2553 / EN-2), this protein is Large ribosomal subunit protein bL20.